Consider the following 502-residue polypeptide: Cytochrome P450 71B16 (502 aa).

The chain crosses the membrane as a helical span at residues Met1–Lys21. Residue Cys444 coordinates heme.

Belongs to the cytochrome P450 family. It depends on heme as a cofactor.

Its subcellular location is the membrane. In Arabidopsis thaliana (Mouse-ear cress), this protein is Cytochrome P450 71B16 (CYP71B16).